We begin with the raw amino-acid sequence, 606 residues long: Probable potassium transport system protein Kup 2 (606 aa).

The next 12 helical transmembrane spans lie at 18-38, 46-66, 97-117, 140-160, 169-189, 204-224, 247-267, 286-306, 339-359, 368-388, 395-415, and 418-438; these read GLVF…IMTL, VLGI…VEYA, VAFV…DGII, AQGV…IFQF, AFGP…IVSI, AVTF…EVIL, AWYF…AFIL, ILYI…SQAL, IYIG…MLIF, AYGL…TMIF, WKVP…TANF, and LPHG…IMII.

The protein belongs to the HAK/KUP transporter (TC 2.A.72) family.

It localises to the cell inner membrane. It carries out the reaction K(+)(in) + H(+)(in) = K(+)(out) + H(+)(out). Its function is as follows. Transport of potassium into the cell. Likely operates as a K(+):H(+) symporter. This is Probable potassium transport system protein Kup 2 from Geobacter metallireducens (strain ATCC 53774 / DSM 7210 / GS-15).